The sequence spans 43 residues: uncharacterized protein (43 aa).

The disordered stretch occupies residues Q13–I43.

This is an uncharacterized protein from Clover yellow mosaic virus (CYMV).